A 616-amino-acid polypeptide reads, in one-letter code: Dihydroxy-acid dehydratase (616 aa).

Position 81 (D81) interacts with Mg(2+). A [2Fe-2S] cluster-binding site is contributed by C122. Mg(2+) is bound by residues D123 and K124. K124 carries the N6-carboxylysine modification. C195 serves as a coordination point for [2Fe-2S] cluster. E491 is a binding site for Mg(2+). Residue S517 is the Proton acceptor of the active site.

It belongs to the IlvD/Edd family. As to quaternary structure, homodimer. [2Fe-2S] cluster serves as cofactor. Mg(2+) is required as a cofactor.

The enzyme catalyses (2R)-2,3-dihydroxy-3-methylbutanoate = 3-methyl-2-oxobutanoate + H2O. The catalysed reaction is (2R,3R)-2,3-dihydroxy-3-methylpentanoate = (S)-3-methyl-2-oxopentanoate + H2O. The protein operates within amino-acid biosynthesis; L-isoleucine biosynthesis; L-isoleucine from 2-oxobutanoate: step 3/4. It participates in amino-acid biosynthesis; L-valine biosynthesis; L-valine from pyruvate: step 3/4. Functions in the biosynthesis of branched-chain amino acids. Catalyzes the dehydration of (2R,3R)-2,3-dihydroxy-3-methylpentanoate (2,3-dihydroxy-3-methylvalerate) into 2-oxo-3-methylpentanoate (2-oxo-3-methylvalerate) and of (2R)-2,3-dihydroxy-3-methylbutanoate (2,3-dihydroxyisovalerate) into 2-oxo-3-methylbutanoate (2-oxoisovalerate), the penultimate precursor to L-isoleucine and L-valine, respectively. This chain is Dihydroxy-acid dehydratase, found in Escherichia coli O8 (strain IAI1).